We begin with the raw amino-acid sequence, 338 residues long: Ketol-acid reductoisomerase (NADP(+)) (338 aa).

Residues 1–181 (MNVFYDKDAD…GGGRAGIIET (181 aa)) form the KARI N-terminal Rossmann domain. Residues 24–27 (YGSQ), R47, and S52 contribute to the NADP(+) site. H107 is a catalytic residue. NADP(+) is bound at residue G133. Residues 182 to 327 (NFREETETDL…AKLRAMMPWI (146 aa)) enclose the KARI C-terminal knotted domain. Residues D190, E194, E226, and E230 each contribute to the Mg(2+) site. S251 is a substrate binding site.

Belongs to the ketol-acid reductoisomerase family. The cofactor is Mg(2+).

It carries out the reaction (2R)-2,3-dihydroxy-3-methylbutanoate + NADP(+) = (2S)-2-acetolactate + NADPH + H(+). The enzyme catalyses (2R,3R)-2,3-dihydroxy-3-methylpentanoate + NADP(+) = (S)-2-ethyl-2-hydroxy-3-oxobutanoate + NADPH + H(+). It participates in amino-acid biosynthesis; L-isoleucine biosynthesis; L-isoleucine from 2-oxobutanoate: step 2/4. It functions in the pathway amino-acid biosynthesis; L-valine biosynthesis; L-valine from pyruvate: step 2/4. Functionally, involved in the biosynthesis of branched-chain amino acids (BCAA). Catalyzes an alkyl-migration followed by a ketol-acid reduction of (S)-2-acetolactate (S2AL) to yield (R)-2,3-dihydroxy-isovalerate. In the isomerase reaction, S2AL is rearranged via a Mg-dependent methyl migration to produce 3-hydroxy-3-methyl-2-ketobutyrate (HMKB). In the reductase reaction, this 2-ketoacid undergoes a metal-dependent reduction by NADPH to yield (R)-2,3-dihydroxy-isovalerate. This is Ketol-acid reductoisomerase (NADP(+)) from Burkholderia cenocepacia (strain HI2424).